Consider the following 600-residue polypeptide: Keratin, type II cuticular Hb4 (600 aa).

Residues 1-165 (MSCRSYRVSS…PNAQRVKKDE (165 aa)) are head. One can recognise an IF rod domain in the interval 165 to 476 (EKEQIKTLNN…RLLEGEESRL (312 aa)). The tract at residues 166 to 200 (KEQIKTLNNKFASFIDKVRFLEQQNKLLETKWSFL) is coil 1A. A linker 1 region spans residues 201–210 (QEQKCIRSNL). The interval 211–311 (EPLFESYITN…YMEEIQLLQS (101 aa)) is coil 1B. The interval 312–328 (HISETSVIVKMDNSRDL) is linker 12. The segment at 329–472 (NLDGIIAEVK…ATYRRLLEGE (144 aa)) is coil 2. Residues 473 to 600 (ESRLCEGVGP…STTTSCRTKY (128 aa)) form a tail region.

It belongs to the intermediate filament family. As to quaternary structure, heterotetramer of two type I and two type II keratins. Expressed in the hair follicles.

This is Keratin, type II cuticular Hb4 (KRT84) from Homo sapiens (Human).